Here is a 285-residue protein sequence, read N- to C-terminus: DVEERADKRRPIWIMGHMVNAIAQIDEFVNLGANSIETDVSFDDNANPEYTYHGIPCDCGRSCLKWENFNDFLKGLRSATTPGNAKYQAKLILVVFDLKTGSLYDNQANEAGKKLAKNLLKHYWNNGNNGGRAYIVLSIPDLNHYPLIKGFKDQLTQDGHPELMDKVGHDFSGNDAIGDVGNAYKKAGISGHVWQSDGITNCLLRGLDRVKQAIANRDSANGFINKVYYWTVDKRATTRDALDAGVDGVMTNYPDVITDVLNESAYKNKFRVASYEDNPWETFKK.

Residues aspartate 1–arginine 5 constitute a propeptide that is removed on maturation. Histidine 17 is a catalytic residue. Residues glutamate 37 and aspartate 39 each coordinate Mg(2+). The Nucleophile role is filled by histidine 53. Intrachain disulfides connect cysteine 57–cysteine 63 and cysteine 59–cysteine 202. Aspartate 97 is a binding site for Mg(2+). Residue asparagine 262 is glycosylated (N-linked (GlcNAc...) asparagine).

This sequence belongs to the arthropod phospholipase D family. Class II subfamily. Class IIa sub-subfamily. Requires Mg(2+) as cofactor. As to expression, expressed by the venom gland.

It is found in the secreted. It carries out the reaction an N-(acyl)-sphingosylphosphocholine = an N-(acyl)-sphingosyl-1,3-cyclic phosphate + choline. It catalyses the reaction an N-(acyl)-sphingosylphosphoethanolamine = an N-(acyl)-sphingosyl-1,3-cyclic phosphate + ethanolamine. The enzyme catalyses a 1-acyl-sn-glycero-3-phosphocholine = a 1-acyl-sn-glycero-2,3-cyclic phosphate + choline. The catalysed reaction is a 1-acyl-sn-glycero-3-phosphoethanolamine = a 1-acyl-sn-glycero-2,3-cyclic phosphate + ethanolamine. Dermonecrotic toxins cleave the phosphodiester linkage between the phosphate and headgroup of certain phospholipids (sphingolipid and lysolipid substrates), forming an alcohol (often choline) and a cyclic phosphate. This toxin acts on sphingomyelin (SM) with high activity. It may also act on ceramide phosphoethanolamine (CPE), lysophosphatidylcholine (LPC) and lysophosphatidylethanolamine (LPE), but not on lysophosphatidylserine (LPS), and lysophosphatidylglycerol (LPG). It acts by transphosphatidylation, releasing exclusively cyclic phosphate products as second products. Shows high hemolytic activity. Induces dermonecrosis, vascular permeability, edema, inflammatory response, and platelet aggregation. Also shows cytotoxicity against renal epithelial cells. In addition, also induces hemolysis in a complement-dependent manner and probably also in a complement-independent manner. The hemolysis provoked in a complement-independent manner may be composed of several steps. The toxin may bind to erythrocyte membranes, may hydrolyze membrane phospholipids (SM and LPC) thus generating metabolism products that may cause hemolysis, probably by provoking an increase of calcium inside cells. The calcium influx may be due to the opening of L-type calcium channels, since L-type calcium channel blockers inhibit calcium influx. In vivo, is lethal to mice when intraperitoneally injected. The chain is Dermonecrotic toxin LiSicTox-alphaIA2aii from Loxosceles intermedia (Brown spider).